The sequence spans 120 residues: NAD(P)H-quinone oxidoreductase subunit 3, chloroplastic (120 aa).

A run of 3 helical transmembrane segments spans residues 9 to 29, 64 to 84, and 88 to 108; these read IFWA…WISA, MFAL…PWAM, and VLGI…VVGL.

This sequence belongs to the complex I subunit 3 family. As to quaternary structure, NDH is composed of at least 16 different subunits, 5 of which are encoded in the nucleus.

Its subcellular location is the plastid. It is found in the chloroplast thylakoid membrane. The enzyme catalyses a plastoquinone + NADH + (n+1) H(+)(in) = a plastoquinol + NAD(+) + n H(+)(out). It catalyses the reaction a plastoquinone + NADPH + (n+1) H(+)(in) = a plastoquinol + NADP(+) + n H(+)(out). In terms of biological role, NDH shuttles electrons from NAD(P)H:plastoquinone, via FMN and iron-sulfur (Fe-S) centers, to quinones in the photosynthetic chain and possibly in a chloroplast respiratory chain. The immediate electron acceptor for the enzyme in this species is believed to be plastoquinone. Couples the redox reaction to proton translocation, and thus conserves the redox energy in a proton gradient. The chain is NAD(P)H-quinone oxidoreductase subunit 3, chloroplastic from Oryza nivara (Indian wild rice).